The sequence spans 480 residues: ATP synthase subunit beta, chloroplastic (480 aa).

Residue 161–168 (GGAGVGKT) participates in ATP binding.

The protein belongs to the ATPase alpha/beta chains family. As to quaternary structure, F-type ATPases have 2 components, CF(1) - the catalytic core - and CF(0) - the membrane proton channel. CF(1) has five subunits: alpha(3), beta(3), gamma(1), delta(1), epsilon(1). CF(0) has four main subunits: a(1), b(1), b'(1) and c(9-12).

It is found in the plastid. The protein resides in the chloroplast thylakoid membrane. The enzyme catalyses ATP + H2O + 4 H(+)(in) = ADP + phosphate + 5 H(+)(out). Its function is as follows. Produces ATP from ADP in the presence of a proton gradient across the membrane. The catalytic sites are hosted primarily by the beta subunits. This is ATP synthase subunit beta, chloroplastic from Euglena gracilis.